The following is an 89-amino-acid chain: Small ribosomal subunit protein uS15 (89 aa).

Belongs to the universal ribosomal protein uS15 family. In terms of assembly, part of the 30S ribosomal subunit. Forms a bridge to the 50S subunit in the 70S ribosome, contacting the 23S rRNA.

One of the primary rRNA binding proteins, it binds directly to 16S rRNA where it helps nucleate assembly of the platform of the 30S subunit by binding and bridging several RNA helices of the 16S rRNA. Functionally, forms an intersubunit bridge (bridge B4) with the 23S rRNA of the 50S subunit in the ribosome. The protein is Small ribosomal subunit protein uS15 of Haemophilus influenzae (strain PittGG).